Here is a 232-residue protein sequence, read N- to C-terminus: Orotate phosphoribosyltransferase (232 aa).

Residues Arg-107, Lys-108, Lys-111, His-113, and 133–141 (EDLTTAGGS) contribute to the 5-phospho-alpha-D-ribose 1-diphosphate site. Thr-137 is a binding site for orotate.

It belongs to the purine/pyrimidine phosphoribosyltransferase family. PyrE subfamily. In terms of assembly, homodimer. The cofactor is Mg(2+).

It carries out the reaction orotidine 5'-phosphate + diphosphate = orotate + 5-phospho-alpha-D-ribose 1-diphosphate. It functions in the pathway pyrimidine metabolism; UMP biosynthesis via de novo pathway; UMP from orotate: step 1/2. Catalyzes the transfer of a ribosyl phosphate group from 5-phosphoribose 1-diphosphate to orotate, leading to the formation of orotidine monophosphate (OMP). The sequence is that of Orotate phosphoribosyltransferase from Rhizobium rhizogenes (strain K84 / ATCC BAA-868) (Agrobacterium radiobacter).